The following is a 432-amino-acid chain: Fibroleukin (432 aa).

An N-terminal signal peptide occupies residues 1 to 19; sequence MRLPGWLWLSSAVLAACRA. The N-linked (GlcNAc...) asparagine glycan is linked to asparagine 24. Residues 71–157 are a coiled coil; sequence GSMEEVLKEV…QGRLETLHLV (87 aa). The interval 100–122 is disordered; that stretch reads QADDHRDPGGNGGNGAETAEDSR. Asparagine 172, asparagine 228, asparagine 256, and asparagine 329 each carry an N-linked (GlcNAc...) asparagine glycan. The region spanning 197 to 429 is the Fibrinogen C-terminal domain; that stretch reads PVQHLIYKDC…QAKMMIRPKN (233 aa). A disulfide bridge links cysteine 206 with cysteine 235. Residues cysteine 364 and cysteine 377 are joined by a disulfide bond.

As to quaternary structure, homotetramer; disulfide-linked. Constitutively expressed in cytotoxic T-cells.

It localises to the secreted. Functionally, converts prothrombin to thrombin. The chain is Fibroleukin (Fgl2) from Mus musculus (Mouse).